The chain runs to 508 residues: BICD family-like cargo adapter 2 (508 aa).

A compositionally biased stretch (low complexity) spans 1 to 22 (MSSPDGPSFPSGPLSGGASPSG). Disordered stretches follow at residues 1–27 (MSSP…EGFF), 132–152 (LGEQ…ALSE), and 300–351 (AHSL…TSLS). 2 coiled-coil regions span residues 64–300 (AAEL…SELA) and 353–458 (AEIL…DMQV). The span at 135–149 (QRSEQQDSGRERARA) shows a compositional bias: basic and acidic residues. The disordered stretch occupies residues 470 to 491 (KELSASASSSTPRRAAPRFSLR). Low complexity predominate over residues 473–489 (SASASSSTPRRAAPRFS).

Belongs to the BICDR family. In terms of assembly, interacts with RAB13.

This Homo sapiens (Human) protein is BICD family-like cargo adapter 2 (BICDL2).